The sequence spans 953 residues: MDVAESPERDPHSPEDEEQPQGLSDDDILRDSGSDQDLDGAGVRASDLEDEESAARGPSQEEEDNHSDEEDRASEPKSQDQDSEVNELSRGPTSSPCEEEGDEGEEDRTSDLRDEASSVTRELDEHELDYDEEVPEEPAPAVQEDEAEKAGAEDDEEKGEGTPREEGKAGVQSVGEKESLEAAKEKKKEDDDGEIDDGEIDDDDLEEGEVKDPSDRKVRPRPTCRFFMKGNCTWGMNCRFIHPGVNDKGNYSLITKADPFPPNGAPPLGPHPLMPANPWGGPVVDEILPPPPPEPPTESAWERGLRHAKEVLKKATIRKEQEPDFEEKRFTVTIGEDEREFDKENEVFRDWNSRIPRDVRDTVLEPYADPYYDYEIERFWRGGQYENFRVQYTETEPYHNYRERERERERENRQRERERERERDRERERRQRERERERERERDKERQRRKEEWERERAKRDEKDRQHRDRDREKEREKEKGKPKPRSPQPPSRQAEPPKKEAATTGPQVKRADEWKDPWRRSKSPKKKLGVSVSPSRARRRRKTSASSASASNSSRSSSRSSSYSGSGSSRSRSRSSSYSSYSSRSSRHSSFSGSRSRSRSFSSSPSPSPTPSPHRPSIRTKGEPAPPPGKAGEKSVKKPAPPPAPPQATKTTAPVPEPTKPGDPREARRKERPARTPPRRRTLSGSGSGSGSSYSGSSSRSRSLSVSSVSSVSSATSSSSSAHSVDSEDMYADLASPVSSASSRSPAPAQTRKEKGKSKKEDGVKEEKRKRDSSTQPPKSAKPPAGGKSSQQPSTPQQAPPGQPQQGTFVAHKEIKLTLLNKAADKGSRKRYEPSDKDRQSPPPAKRPNTSPDRGSRDRKSGGRLGSPKPERQRGQNSKAPAAPADRKRQLSPQSKSSSKVTSVPGKASDPGAASTKSGKASTLSRREELLKQLKAVEDAIARKRAKIPGKA.

Met-1 is modified (N-acetylmethionine). Positions 1–14 are enriched in basic and acidic residues; it reads MDVAESPERDPHSP. Disordered regions lie at residues 1 to 222 and 391 to 928; these read MDVA…RPRP and QYTE…LSRR. Ser-6 carries the phosphoserine modification. The span at 15–26 shows a compositional bias: acidic residues; the sequence is EDEEQPQGLSDD. 9 positions are modified to phosphoserine: Ser-34, Ser-46, Ser-53, Ser-59, Ser-67, Ser-74, Ser-78, Ser-83, and Ser-95. Acidic residues predominate over residues 60–72; it reads QEEEDNHSDEEDR. A compositionally biased stretch (acidic residues) spans 97–106; sequence CEEEGDEGEE. Residues 105 to 134 adopt a coiled-coil conformation; that stretch reads EEDRTSDLRDEASSVTRELDEHELDYDEEV. Residues 107 to 124 show a composition bias toward basic and acidic residues; the sequence is DRTSDLRDEASSVTRELD. At Thr-109 the chain carries Phosphothreonine. A phosphoserine mark is found at Ser-110 and Ser-118. 2 stretches are compositionally biased toward acidic residues: residues 125–136 and 143–158; these read EHELDYDEEVPE and QEDE…DEEK. Residues 159 to 168 are compositionally biased toward basic and acidic residues; the sequence is GEGTPREEGK. Thr-162 carries the post-translational modification Phosphothreonine. Ser-173 and Ser-179 each carry phosphoserine. Over residues 175–190 the composition is skewed to basic and acidic residues; that stretch reads GEKESLEAAKEKKKED. Residues 191-207 show a composition bias toward acidic residues; sequence DDGEIDDGEIDDDDLEE. A compositionally biased stretch (basic and acidic residues) spans 208 to 217; it reads GEVKDPSDRK. Residues 219–245 form a C3H1-type zinc finger; that stretch reads RPRPTCRFFMKGNCTWGMNCRFIHPGV. Residues 396–482 are compositionally biased toward basic and acidic residues; sequence EPYHNYRERE…EKEREKEKGK (87 aa). A coiled-coil region spans residues 399–464; it reads HNYRERERER…RERAKRDEKD (66 aa). Residue Ser-487 is modified to Phosphoserine. Residue Lys-510 forms a Glycyl lysine isopeptide (Lys-Gly) (interchain with G-Cter in SUMO2) linkage. Over residues 510–520 the composition is skewed to basic and acidic residues; that stretch reads KRADEWKDPWR. Ser-532, Ser-534, and Ser-536 each carry phosphoserine. Positions 545 to 606 are enriched in low complexity; the sequence is SASSASASNS…SRSRSFSSSP (62 aa). Glycyl lysine isopeptide (Lys-Gly) (interchain with G-Cter in SUMO2) cross-links involve residues Lys-622 and Lys-661. The segment covering 661 to 670 has biased composition (basic and acidic residues); the sequence is KPGDPREARR. Composition is skewed to low complexity over residues 692 to 725 and 736 to 750; these read GSSY…SAHS and ASPV…PAPA. The span at 760–774 shows a compositional bias: basic and acidic residues; it reads KKEDGVKEEKRKRDS. A Glycyl lysine isopeptide (Lys-Gly) (interchain with G-Cter in SUMO2) cross-link involves residue Lys-766. Positions 778-798 are enriched in low complexity; sequence PPKSAKPPAGGKSSQQPSTPQ. Lys-814 is modified (N6-acetyllysine). Residue Lys-817 forms a Glycyl lysine isopeptide (Lys-Gly) (interchain with G-Cter in SUMO2) linkage. Over residues 824–841 the composition is skewed to basic and acidic residues; it reads AADKGSRKRYEPSDKDRQ. Phosphoserine occurs at positions 842, 852, 868, 893, and 896. Low complexity predominate over residues 893–906; the sequence is SPQSKSSSKVTSVP. A Glycyl lysine isopeptide (Lys-Gly) (interchain with G-Cter in SUMO2) cross-link involves residue Lys-908. Over residues 916–925 the composition is skewed to polar residues; that stretch reads STKSGKASTL. Residues 921 to 950 adopt a coiled-coil conformation; sequence KASTLSRREELLKQLKAVEDAIARKRAKIP.

As to quaternary structure, interacts with ZFC3H1 in a RNase-insensitive manner.

The protein localises to the nucleus. The sequence is that of Zinc finger CCCH domain-containing protein 18 from Homo sapiens (Human).